The chain runs to 162 residues: Phospholipase A and acyltransferase 3 (162 aa).

Over 1 to 133 (MLAPIPEPKP…VPRSDQVRDA (133 aa)) the chain is Cytoplasmic. In terms of domain architecture, LRAT spans 13-129 (LIEIFRPMYR…LRYGVPRSDQ (117 aa)). Active-site residues include H23 and H35. The active-site Acyl-thioester intermediate is the C113. A helical transmembrane segment spans residues 134–154 (VKAVGIAGVGLAALGLVGVML). At 155 to 162 (SRNKKQKQ) the chain is on the lumenal side.

This sequence belongs to the H-rev107 family. As to quaternary structure, interacts with PPP2R1A; this interaction might decrease PP2A activity. In terms of tissue distribution, ubiquitously expressed in normal tissues but down-regulated in primary carcinomas or in many cell lines derived from tumors. Highly expressed in white adipose tissue and in adipocytes. Expressed at lower levels in brown adipose tissue.

It is found in the cell membrane. The protein localises to the cytoplasm. It localises to the cytosol. The protein resides in the perinuclear region. Its subcellular location is the peroxisome membrane. It is found in the mitochondrion membrane. The protein localises to the nucleus envelope. It localises to the lysosome membrane. The protein resides in the endoplasmic reticulum membrane. The catalysed reaction is a 1,2-diacyl-sn-glycero-3-phosphocholine + H2O = a 1-acyl-sn-glycero-3-phosphocholine + a fatty acid + H(+). It carries out the reaction a 1,2-diacyl-sn-glycero-3-phosphocholine + H2O = a 2-acyl-sn-glycero-3-phosphocholine + a fatty acid + H(+). It catalyses the reaction 1,2-dihexadecanoyl-sn-glycero-3-phosphocholine + H2O = 1-hexadecanoyl-sn-glycero-3-phosphocholine + hexadecanoate + H(+). The enzyme catalyses 1,2-dihexadecanoyl-sn-glycero-3-phosphocholine + H2O = 2-hexadecanoyl-sn-glycero-3-phosphocholine + hexadecanoate + H(+). The catalysed reaction is 1-hexadecanoyl-2-(9Z-octadecenoyl)-sn-glycero-3-phosphocholine + H2O = 2-(9Z-octadecenoyl)-sn-glycero-3-phosphocholine + hexadecanoate + H(+). It carries out the reaction 1-hexadecanoyl-2-(9Z-octadecenoyl)-sn-glycero-3-phosphocholine + H2O = 1-hexadecanoyl-sn-glycero-3-phosphocholine + (9Z)-octadecenoate + H(+). It catalyses the reaction 1-hexadecanoyl-2-(5Z,8Z,11Z,14Z-eicosatetraenoyl)-sn-glycero-3-phosphocholine + H2O = 1-hexadecanoyl-sn-glycero-3-phosphocholine + (5Z,8Z,11Z,14Z)-eicosatetraenoate + H(+). The enzyme catalyses 1-hexadecanoyl-2-(5Z,8Z,11Z,14Z-eicosatetraenoyl)-sn-glycero-3-phosphocholine + H2O = 2-(5Z,8Z,11Z,14Z)-eicosatetraenoyl-sn-glycero-3-phosphocholine + hexadecanoate + H(+). The catalysed reaction is 1-hexadecanoyl-2-(9Z,12Z-octadecadienoyl)-sn-glycero-3-phosphoethanolamine + H2O = 1-hexadecanoyl-sn-glycero-3-phosphoethanolamine + (9Z,12Z)-octadecadienoate + H(+). It carries out the reaction 1-hexadecanoyl-2-(9Z,12Z-octadecadienoyl)-sn-glycero-3-phosphoethanolamine + H2O = 2-(9Z,12Z)-octadecadienoyl-sn-glycero-3-phosphoethanolamine + hexadecanoate + H(+). It catalyses the reaction 1-hexadecanoyl-2-(5Z,8Z,11Z,14Z-eicosatetraenoyl)-sn-glycero-3-phosphoethanolamine + H2O = 1-hexadecanoyl-sn-glycero-3-phosphoethanolamine + (5Z,8Z,11Z,14Z)-eicosatetraenoate + H(+). The enzyme catalyses 1-hexadecanoyl-2-(5Z,8Z,11Z,14Z-eicosatetraenoyl)-sn-glycero-3-phosphoethanolamine + H2O = 2-(5Z,8Z,11Z,14Z)-eicosatetraenoyl-sn-glycero-3-phosphoethanolamine + hexadecanoate + H(+). The catalysed reaction is 1-hexanoyl-2-acyl-sn-glycero-3-phosphocholine + H2O = hexanoate + a 2-acyl-sn-glycero-3-phosphocholine + H(+). It carries out the reaction 1-hexanoyl-2-acyl-sn-glycero-3-phosphocholine + H2O = 1-hexanoyl-sn-glycero-3-phosphocholine + a fatty acid + H(+). It catalyses the reaction 1,2-diheptadecanoyl-sn-glycero-3-phosphoethanolamine + 1-(9Z-octadecenoyl)-2-hexadecanoyl-sn-glycero-3-phosphocholine = 1,2-diheptadecanoyl-sn-glycero-3-phospho-N-hexadecanoyl-ethanolamine + 1-(9Z-octadecenoyl)-sn-glycero-3-phosphocholine + H(+). The enzyme catalyses 1,2-diheptadecanoyl-sn-glycero-3-phosphoethanolamine + 1-(9Z-octadecenoyl)-2-hexadecanoyl-sn-glycero-3-phosphocholine = 1,2-diheptadecanoyl-sn-glycero-3-phospho-N-(9Z-octadecenoyl)-ethanolamine + 2-hexadecanoyl-sn-glycero-3-phosphocholine + H(+). The catalysed reaction is 1,2-dihexanoyl-sn-glycero-3-phosphoethanolamine + 2-heptanoyl-sn-glycero-3-phosphocholine = hexanoyl-sn-glycero-3-phosphoethanolamine + 1-hexanoyl-2-heptanoyl-sn-glycero-3-phosphocholine. It carries out the reaction 1-hexadecanoyl-2-octadecanoyl-sn-glycero-3-phosphocholine + H2O = octadecanoate + 1-hexadecanoyl-sn-glycero-3-phosphocholine + H(+). It catalyses the reaction 1-hexadecanoyl-2-octadecanoyl-sn-glycero-3-phosphocholine + H2O = 2-octadecanoyl-sn-glycero-3-phosphocholine + hexadecanoate + H(+). The enzyme catalyses 1-octadecanoyl-2-hexadecanoyl-sn-glycero-3-phosphocholine + H2O = 1-octadecanoyl-sn-glycero-3-phosphocholine + hexadecanoate + H(+). The catalysed reaction is 1-octadecanoyl-2-hexadecanoyl-sn-glycero-3-phosphocholine + H2O = 2-hexadecanoyl-sn-glycero-3-phosphocholine + octadecanoate + H(+). It carries out the reaction 1-hexadecanoyl-2-(9Z,12Z-octadecadienoyl)-sn-glycero-3-phosphocholine + H2O = (9Z,12Z)-octadecadienoate + 1-hexadecanoyl-sn-glycero-3-phosphocholine + H(+). It catalyses the reaction 1-hexadecanoyl-2-(9Z,12Z-octadecadienoyl)-sn-glycero-3-phosphocholine + H2O = 2-(9Z,12Z-octadecadienoyl)-sn-glycero-3-phosphocholine + hexadecanoate + H(+). The enzyme catalyses 1,2-di-(9Z-octadecenoyl)-sn-glycero-3-phosphocholine + H2O = 2-(9Z-octadecenoyl)-sn-glycero-3-phosphocholine + (9Z)-octadecenoate + H(+). The catalysed reaction is 1,2-dihexadecanoyl-sn-glycero-3-phosphocholine + H2O = hexadecanoyl-sn-glycero-3-phosphocholine + hexadecanoate + H(+). It carries out the reaction 1,2-di-(9Z-octadecenoyl)-sn-glycero-3-phosphocholine + H2O = 1-(9Z-octadecenoyl)-sn-glycero-3-phosphocholine + (9Z)-octadecenoate + H(+). It catalyses the reaction 1,2-di-(9Z-octadecenoyl)-sn-glycero-3-phosphoethanolamine + 1,2-dihexadecanoyl-sn-glycero-3-phosphocholine = hexadecanoyl-sn-glycero-3-phosphocholine + N-hexadecanoyl-1,2-di-(9Z-octadecenoyl)-sn-glycero-3-phosphoethanolamine + H(+). The enzyme catalyses 1,2-di-(9Z,12Z-octadecadienoyl)-sn-glycero-3-phosphocholine + H2O = 1-(9Z,12Z)-octadecadienoyl-sn-glycero-3-phosphocholine + (9Z,12Z)-octadecadienoate + H(+). Functionally, exhibits both phospholipase A1/2 and acyltransferase activities. Shows phospholipase A1 (PLA1) and A2 (PLA2), catalyzing the calcium-independent release of fatty acids from the sn-1 or sn-2 position of glycerophospholipids. For most substrates, PLA1 activity is much higher than PLA2 activity. Shows O-acyltransferase activity, catalyzing the transfer of a fatty acyl group from glycerophospholipid to the hydroxyl group of lysophospholipid. Shows N-acyltransferase activity,catalyzing the calcium-independent transfer of a fatty acyl group at the sn-1 position of phosphatidylcholine (PC) and other glycerophospholipids to the primary amine of phosphatidylethanolamine (PE), forming N-acylphosphatidylethanolamine (NAPE), which serves as precursor for N-acylethanolamines (NAEs). Exhibits high N-acyltransferase activity and low phospholipase A1/2 activity. Required for complete organelle rupture and degradation that occur during eye lens terminal differentiation, when fiber cells that compose the lens degrade all membrane-bound organelles in order to provide lens with transparency to allow the passage of light. Organelle membrane degradation is probably catalyzed by the phospholipase activity. Its function is as follows. (Microbial infection) Acts as a host factor for picornaviruses: required during early infection to promote viral genome release into the cytoplasm. The sequence is that of Phospholipase A and acyltransferase 3 from Mus musculus (Mouse).